Reading from the N-terminus, the 485-residue chain is Rhamnulokinase (485 aa).

Position 8 to 12 (8 to 12 (ASSGR)) interacts with ATP. Substrate contacts are provided by residues Gly78 and 231–233 (HDT). Catalysis depends on Asp232, which acts as the Proton acceptor. Thr254 serves as a coordination point for ATP. Asn291 is a binding site for substrate. An ATP-binding site is contributed by Gln299. A disulfide bridge connects residues Cys348 and Cys365. Gly397 is a binding site for ATP. A disulfide bridge connects residues Cys408 and Cys412.

The protein belongs to the rhamnulokinase family. Requires Mg(2+) as cofactor.

It catalyses the reaction L-rhamnulose + ATP = L-rhamnulose 1-phosphate + ADP + H(+). Its pathway is carbohydrate degradation; L-rhamnose degradation; glycerone phosphate from L-rhamnose: step 2/3. Involved in the catabolism of L-rhamnose (6-deoxy-L-mannose). Catalyzes the transfer of the gamma-phosphate group from ATP to the 1-hydroxyl group of L-rhamnulose to yield L-rhamnulose 1-phosphate. The polypeptide is Rhamnulokinase (Yersinia pestis bv. Antiqua (strain Antiqua)).